Here is a 261-residue protein sequence, read N- to C-terminus: Transmembrane protein 187 (261 aa).

6 helical membrane passes run 8–28 (AFVHVAVAGGLCAVAVFTGIF), 43–63 (APVAGLPAFLAMPFNSLVNMA), 88–108 (VFAAMALLYGPVQWLRLWTQW), 113–133 (VLDQWLTLPIFAWPVAWCLYL), 140–162 (WLFLSLECVSLASYGLALLHPQG), and 190–210 (SATYLALGVLSCLGFVVLKLC).

In terms of tissue distribution, ubiquitous.

Its subcellular location is the membrane. The chain is Transmembrane protein 187 (TMEM187) from Homo sapiens (Human).